Consider the following 90-residue polypeptide: uncharacterized protein (90 aa).

This is an uncharacterized protein from Methanocaldococcus jannaschii (strain ATCC 43067 / DSM 2661 / JAL-1 / JCM 10045 / NBRC 100440) (Methanococcus jannaschii).